We begin with the raw amino-acid sequence, 245 residues long: Probable phosphatase NT01EI_1577 (245 aa).

9 residues coordinate Zn(2+): His-7, His-9, His-15, His-40, Glu-73, His-101, His-131, Asp-192, and His-194.

It belongs to the PHP family. Homotrimer. Requires Zn(2+) as cofactor.

The sequence is that of Probable phosphatase NT01EI_1577 from Edwardsiella ictaluri (strain 93-146).